The following is a 92-amino-acid chain: Ezrin (92 aa).

One can recognise an FERM domain in the interval 1–72 (QLFDQVVKGF…PDFVFYAPRR (72 aa)). Residue lysine 15 is modified to N6-acetyllysine. Residues 42-92 (EIRNISFNDKKFVIKPIDKKAPDFVFYAPRRKPDTIEVQQMKLQDFEQKTK) are interaction with SCYL3.

As to quaternary structure, interacts with PALS1 and NHERF2. Found in a complex with EZR, PODXL and NHERF2. Interacts with MCC, PLEKHG6, PODXL, SCYL3/PACE1, NHERF1 and TMEM8B. Interacts (when phosphorylated) with FES/FPS. Interacts with dimeric S100P, the interaction may be activating through unmasking of F-actin binding sites. Identified in complexes that contain VIM, EZR, AHNAK, BFSP1, BFSP2, ANK2, PLEC, PRX and spectrin. Detected in a complex composed of at least EZR, AHNAK, PPL and PRX. Interacts with PDPN (via cytoplasmic domain); activates RHOA and promotes epithelial-mesenchymal transition. Interacts with SPN/CD43 cytoplasmic tail, CD44 and ICAM2. Interacts with CLIC5; may work together in a complex which also includes RDX and MYO6 to stabilize linkages between the plasma membrane and subjacent actin cytoskeleton at the base of stereocilia. Phosphorylated by tyrosine-protein kinases. Phosphorylation by ROCK2 suppresses the head-to-tail association of the N-terminal and C-terminal halves resulting in an opened conformation which is capable of actin and membrane-binding. In terms of processing, S-nitrosylation is induced by interferon-gamma and oxidatively-modified low-densitity lipoprotein (LDL(ox)) possibly implicating the iNOS-S100A8/9 transnitrosylase complex.

Its subcellular location is the apical cell membrane. The protein localises to the cell projection. It is found in the microvillus membrane. It localises to the ruffle membrane. The protein resides in the cytoplasm. Its subcellular location is the cell cortex. The protein localises to the cytoskeleton. It is found in the microvillus. Its activity is regulated as follows. A head-to-tail association, of the N-terminal and C-terminal halves results in a closed conformation (inactive form) which is incapable of actin or membrane-binding. Probably involved in connections of major cytoskeletal structures to the plasma membrane. In epithelial cells, required for the formation of microvilli and membrane ruffles on the apical pole. Along with PLEKHG6, required for normal macropinocytosis. The protein is Ezrin of Mesocricetus auratus (Golden hamster).